Here is a 690-residue protein sequence, read N- to C-terminus: Polyribonucleotide nucleotidyltransferase (690 aa).

Mg(2+)-binding residues include D482 and D488. Residues 549–608 (PRIITIQINPDRIRDVIGPGGKVIRALTEETGATIDIQDNGTVTIASVDGEAGAAAKRRI) enclose the KH domain. Positions 618-686 (DTIYDGKVAK…RQGKIKLSMK (69 aa)) constitute an S1 motif domain.

It belongs to the polyribonucleotide nucleotidyltransferase family. As to quaternary structure, component of the RNA degradosome, which is a multiprotein complex involved in RNA processing and mRNA degradation. Requires Mg(2+) as cofactor.

Its subcellular location is the cytoplasm. It carries out the reaction RNA(n+1) + phosphate = RNA(n) + a ribonucleoside 5'-diphosphate. In terms of biological role, involved in mRNA degradation. Catalyzes the phosphorolysis of single-stranded polyribonucleotides processively in the 3'- to 5'-direction. The sequence is that of Polyribonucleotide nucleotidyltransferase from Acidithiobacillus ferrooxidans (strain ATCC 23270 / DSM 14882 / CIP 104768 / NCIMB 8455) (Ferrobacillus ferrooxidans (strain ATCC 23270)).